The following is a 223-amino-acid chain: UPF0441 protein YgiB (223 aa).

The span at 178 to 195 (TVPKTAMAPKPATTTTVT) shows a compositional bias: low complexity. The interval 178–223 (TVPKTAMAPKPATTTTVTRGGFGESVAKQSTMQRSATGTSSRSMGG) is disordered. Residues 204–223 (AKQSTMQRSATGTSSRSMGG) show a composition bias toward polar residues.

It belongs to the UPF0441 family.

The sequence is that of UPF0441 protein YgiB from Shigella flexneri serotype 5b (strain 8401).